Here is a 314-residue protein sequence, read N- to C-terminus: 4-hydroxy-3-methylbut-2-enyl diphosphate reductase (314 aa).

Cysteine 12 is a [4Fe-4S] cluster binding site. (2E)-4-hydroxy-3-methylbut-2-enyl diphosphate contacts are provided by histidine 41 and histidine 74. Dimethylallyl diphosphate-binding residues include histidine 41 and histidine 74. Positions 41 and 74 each coordinate isopentenyl diphosphate. [4Fe-4S] cluster is bound at residue cysteine 96. Histidine 124 provides a ligand contact to (2E)-4-hydroxy-3-methylbut-2-enyl diphosphate. Histidine 124 is a binding site for dimethylallyl diphosphate. Isopentenyl diphosphate is bound at residue histidine 124. Glutamate 126 (proton donor) is an active-site residue. Threonine 167 is a (2E)-4-hydroxy-3-methylbut-2-enyl diphosphate binding site. Cysteine 197 contributes to the [4Fe-4S] cluster binding site. Residues serine 225, serine 226, asparagine 227, and serine 269 each coordinate (2E)-4-hydroxy-3-methylbut-2-enyl diphosphate. The dimethylallyl diphosphate site is built by serine 225, serine 226, asparagine 227, and serine 269. Residues serine 225, serine 226, asparagine 227, and serine 269 each contribute to the isopentenyl diphosphate site.

Belongs to the IspH family. The cofactor is [4Fe-4S] cluster.

It carries out the reaction isopentenyl diphosphate + 2 oxidized [2Fe-2S]-[ferredoxin] + H2O = (2E)-4-hydroxy-3-methylbut-2-enyl diphosphate + 2 reduced [2Fe-2S]-[ferredoxin] + 2 H(+). The catalysed reaction is dimethylallyl diphosphate + 2 oxidized [2Fe-2S]-[ferredoxin] + H2O = (2E)-4-hydroxy-3-methylbut-2-enyl diphosphate + 2 reduced [2Fe-2S]-[ferredoxin] + 2 H(+). The protein operates within isoprenoid biosynthesis; dimethylallyl diphosphate biosynthesis; dimethylallyl diphosphate from (2E)-4-hydroxy-3-methylbutenyl diphosphate: step 1/1. It participates in isoprenoid biosynthesis; isopentenyl diphosphate biosynthesis via DXP pathway; isopentenyl diphosphate from 1-deoxy-D-xylulose 5-phosphate: step 6/6. Its function is as follows. Catalyzes the conversion of 1-hydroxy-2-methyl-2-(E)-butenyl 4-diphosphate (HMBPP) into a mixture of isopentenyl diphosphate (IPP) and dimethylallyl diphosphate (DMAPP). Acts in the terminal step of the DOXP/MEP pathway for isoprenoid precursor biosynthesis. This Aliivibrio fischeri (strain MJ11) (Vibrio fischeri) protein is 4-hydroxy-3-methylbut-2-enyl diphosphate reductase.